The sequence spans 276 residues: Dermonecrotic toxin LlSicTox-alphaIV2ii (276 aa).

His5 is a catalytic residue. Mg(2+) is bound by residues Glu25 and Asp27. Catalysis depends on His41, which acts as the Nucleophile. Intrachain disulfides connect Cys45–Cys51 and Cys47–Cys193. Residue Asp85 participates in Mg(2+) binding.

Belongs to the arthropod phospholipase D family. Class II subfamily. Requires Mg(2+) as cofactor. Expressed by the venom gland.

The protein resides in the secreted. The enzyme catalyses an N-(acyl)-sphingosylphosphocholine = an N-(acyl)-sphingosyl-1,3-cyclic phosphate + choline. The catalysed reaction is an N-(acyl)-sphingosylphosphoethanolamine = an N-(acyl)-sphingosyl-1,3-cyclic phosphate + ethanolamine. It catalyses the reaction a 1-acyl-sn-glycero-3-phosphocholine = a 1-acyl-sn-glycero-2,3-cyclic phosphate + choline. It carries out the reaction a 1-acyl-sn-glycero-3-phosphoethanolamine = a 1-acyl-sn-glycero-2,3-cyclic phosphate + ethanolamine. Dermonecrotic toxins cleave the phosphodiester linkage between the phosphate and headgroup of certain phospholipids (sphingolipid and lysolipid substrates), forming an alcohol (often choline) and a cyclic phosphate. This toxin acts on sphingomyelin (SM). It may also act on ceramide phosphoethanolamine (CPE), lysophosphatidylcholine (LPC) and lysophosphatidylethanolamine (LPE), but not on lysophosphatidylserine (LPS), and lysophosphatidylglycerol (LPG). It acts by transphosphatidylation, releasing exclusively cyclic phosphate products as second products. Induces dermonecrosis, hemolysis, increased vascular permeability, edema, inflammatory response, and platelet aggregation. The chain is Dermonecrotic toxin LlSicTox-alphaIV2ii from Loxosceles laeta (South American recluse spider).